We begin with the raw amino-acid sequence, 874 residues long: Alanine--tRNA ligase (874 aa).

4 residues coordinate Zn(2+): histidine 564, histidine 568, cysteine 665, and histidine 669.

It belongs to the class-II aminoacyl-tRNA synthetase family. The cofactor is Zn(2+).

It localises to the cytoplasm. The enzyme catalyses tRNA(Ala) + L-alanine + ATP = L-alanyl-tRNA(Ala) + AMP + diphosphate. In terms of biological role, catalyzes the attachment of alanine to tRNA(Ala) in a two-step reaction: alanine is first activated by ATP to form Ala-AMP and then transferred to the acceptor end of tRNA(Ala). Also edits incorrectly charged Ser-tRNA(Ala) and Gly-tRNA(Ala) via its editing domain. The polypeptide is Alanine--tRNA ligase (Burkholderia pseudomallei (strain 668)).